A 146-amino-acid polypeptide reads, in one-letter code: Anti-sigma F factor (146 aa).

The protein belongs to the anti-sigma-factor family.

The catalysed reaction is L-seryl-[protein] + ATP = O-phospho-L-seryl-[protein] + ADP + H(+). It catalyses the reaction L-threonyl-[protein] + ATP = O-phospho-L-threonyl-[protein] + ADP + H(+). Its function is as follows. Binds to sigma F and blocks its ability to form an RNA polymerase holoenzyme (E-sigma F). Phosphorylates SpoIIAA on a serine residue. This phosphorylation may enable SpoIIAA to act as an anti-anti-sigma factor that counteracts SpoIIAB and thus releases sigma F from inhibition. The chain is Anti-sigma F factor from Geobacillus thermodenitrificans (strain NG80-2).